A 231-amino-acid polypeptide reads, in one-letter code: NADH-ubiquinone oxidoreductase chain 4 (231 aa).

The next 6 membrane-spanning stretches (helical) occupy residues 1 to 21, 34 to 54, 63 to 85, 89 to 111, 118 to 138, and 169 to 189; these read PIAG…YGII, MFLP…LTCL, IAYS…TPWG, AMAL…NTTY, ILIL…WWLL, and TIIL…HMFL.

The protein belongs to the complex I subunit 4 family.

Its subcellular location is the mitochondrion membrane. The catalysed reaction is a ubiquinone + NADH + 5 H(+)(in) = a ubiquinol + NAD(+) + 4 H(+)(out). In terms of biological role, core subunit of the mitochondrial membrane respiratory chain NADH dehydrogenase (Complex I) that is believed to belong to the minimal assembly required for catalysis. Complex I functions in the transfer of electrons from NADH to the respiratory chain. The immediate electron acceptor for the enzyme is believed to be ubiquinone. This chain is NADH-ubiquinone oxidoreductase chain 4 (MT-ND4), found in Trimeresurus cantori (Cantor's pit viper).